The primary structure comprises 1456 residues: CLIP-associating protein 1-B (1456 aa).

3 HEAT repeats span residues 68–87 (LLGM…RFRT), 88–124 (QIGT…QASN), and 163–200 (LTLS…HVGE). A disordered region spans residues 237 to 296 (TDKNFDDEDSVDGNRPSSASSSASSKAPQTARRGVSLGTGRRPGTSSAAPKTGGTAKEGA). The segment covering 284–296 (AAPKTGGTAKEGA) has biased composition (low complexity). An HEAT 4 repeat occupies 442-479 (THVPRLIPIITSNCTSKSVAVRRRCYEFLDLLLQEWQT). Disordered stretches follow at residues 547–728 (SIVS…DRFG) and 776–796 (GMYS…ERSY). Residues 550 to 569 (SLPQSDRSSSSSQESLNRPL) show a composition bias toward low complexity. Over residues 573–594 (RSPTGSTVSRATSKSTTGSLQR) the composition is skewed to polar residues. Low complexity-rich tracts occupy residues 603-618 (AAAT…ASTA), 642-656 (QSSG…TPAD), and 665-679 (VVSQ…SSPG). Over residues 711 to 721 (QGCSRETSPSR) the composition is skewed to polar residues. The segment covering 785-796 (SDASSACSERSY) has biased composition (low complexity). The stretch at 930-967 (QQFNILMRFIVDQTQTPNLKVKVAILKYIESLARQMDP) is one HEAT 5 repeat. 2 disordered regions span residues 1037–1080 (LKNS…GLSP) and 1121–1147 (VRRD…DLRG). A compositionally biased stretch (low complexity) spans 1038 to 1050 (KNSSNSSMGSPSN). The segment covering 1062 to 1074 (SRASPLTSPTNCS) has biased composition (polar residues). Residues 1121–1130 (VRRDGKKESE) are compositionally biased toward basic and acidic residues. HEAT repeat units lie at residues 1260 to 1297 (EHFK…NQPA) and 1378 to 1415 (QILP…VIGE).

Belongs to the CLASP family. Interacts (via C-terminus) with clip1/clip-170, and cenpe.

The protein resides in the cytoplasm. The protein localises to the cytoskeleton. It localises to the microtubule organizing center. It is found in the centrosome. Its subcellular location is the chromosome. The protein resides in the centromere. The protein localises to the kinetochore. It localises to the spindle. It is found in the golgi apparatus. Its subcellular location is the trans-Golgi network. Microtubule plus-end tracking protein that promotes the stabilization of dynamic microtubules during anaphase. Plays a crucial role in chromatin-induced microtubule formation. May also act at microtubule minus ends. May be involved in the nucleation of noncentrosomal microtubules originating from the trans-Golgi network (TGN). The polypeptide is CLIP-associating protein 1-B (Xenopus laevis (African clawed frog)).